The following is a 536-amino-acid chain: Caspase recruitment domain-containing protein 9 (536 aa).

Ser2 carries the post-translational modification Phosphoserine. Residues Asp3, Cys10, and His73 each contribute to the Zn(2+) site. Residues 6-98 enclose the CARD domain; that stretch reads NDDECWSALE…QLYRKVTGKE (93 aa). The tract at residues 99–116 is linker; the sequence is PARVFSMIIDASGESGLT. 2 coiled-coil regions span residues 117–277 and 303–420; these read QLLM…HRNS and SLRK…QLDM. Lys125 is covalently cross-linked (Glycyl lysine isopeptide (Lys-Gly) (interchain with G-Cter in ubiquitin)). Thr231 bears the Phosphothreonine mark. Ser277 bears the Phosphoserine mark. Phosphoserine occurs at positions 424, 425, 431, 451, 461, 483, and 498. The disordered stretch occupies residues 425–451; it reads SDLEDSSPRNSQELSLPQDLEEDAQLS. The segment at 472–536 is disordered; it reads KHLSQTHDTV…GSDNTDTEGS (65 aa). The span at 487 to 502 shows a compositional bias: basic and acidic residues; the sequence is PPEKERRRLKESFENY. 2 positions are modified to phosphothreonine; by CK2: Thr531 and Thr533.

As to quaternary structure, monomer. Homodimer; homodimerization is mediated by the CARD domain which forms an extensive interaction with the adjacent linker and coiled-coil regions; leads to an autoinhibited state. Homomultimer; polymerizes following activation, forming a nucleating helical template that seeds BCL10-filament formation via a CARD-CARD interaction. Interacts (via CARD domain) with BCL10 (via CARD domain); interaction takes place following CARD9 activation and polymerization, leading to the formation of a filamentous CBM complex assembly. Component of a CBM complex (CARD9-BCL10, MALT1), composed of CARD9, BCL10 and MALT1. Interacts with RASGRF1. Interacts with NOD2 (via NACHT domain); interaction is direct. Interacts with RIPK2. Interacts with VHL; without leading to protein degradation. In terms of processing, phosphorylated at Thr-231 by PRKCD downstream of C-type lectin receptors activation: phosphorylation promotes interaction with BCL10, followed by activation of NF-kappa-B and MAP kinase p38 pathways. Phosphorylated at Thr-531 and Thr-533 by CK2 following interaction with VHL, leading to inhibit the ability to activate NF-kappa-B. Ubiquitinated at Lys-125 via 'Lys-27'-linked ubiquitin by TRIM62 downstream of C-type lectin receptors activation; leading to CARD9 activation, followed by activation of NF-kappa-B and MAP kinase p38 pathways. Deubiquitinated at Lys-125 by USP15, inhibiting CARD9.

The protein resides in the cytoplasm. Maintained in an autoinhibited state via homodimerization in which the CARD domain forms an extensive interaction with the adjacent linker and coiled-coil regions. Activation downstream of C-type lectin receptors, by phosphorylation by PRKCD and/or ubiquitination by TRIM62, triggers disruption of the CARD domain-coiled coil interface, CARD9 homooligomerization and BCL10 recruitment, followed by activation of NF-kappa-B and MAP kinase p38 pathways. Zinc-binding inhibits activation by stabilizing the CARD ground-state conformation and restricting its capacity to form BCL10-nucleating filaments. Its function is as follows. Adapter protein that plays a key role in innate immune response against fungi by forming signaling complexes downstream of C-type lectin receptors. CARD9-mediated signals are essential for antifungal immunity against a subset of fungi from the phylum Ascomycota. Transduces signals in myeloid cells downstream of C-type lectin receptors CLEC7A (dectin-1), CLEC6A (dectin-2) and CLEC4E (Mincle), which detect pathogen-associated molecular pattern metabolites (PAMPs), such as fungal carbohydrates, and trigger CARD9 activation. Upon activation, CARD9 homooligomerizes to form a nucleating helical template that recruits BCL10 via CARD-CARD interaction, thereby promoting polymerization of BCL10 and subsequent recruitment of MALT1: this leads to activation of NF-kappa-B and MAP kinase p38 (MAPK11, MAPK12, MAPK13 and/or MAPK14) pathways which stimulate expression of genes encoding pro-inflammatory cytokines and chemokines. CARD9 signaling in antigen-presenting cells links innate sensing of fungi to the activation of adaptive immunity and provides a cytokine milieu that induces the development and subsequent of interleukin 17-producing T helper (Th17) cells. Also involved in activation of myeloid cells via classical ITAM-associated receptors and TLR: required for TLR-mediated activation of MAPK, while it is not required for TLR-induced activation of NF-kappa-B. CARD9 can also be engaged independently of BCL10: forms a complex with RASGRF1 downstream of C-type lectin receptors, which recruits and activates HRAS, leading to ERK activation and the production of cytokines. Acts as an important regulator of the intestinal commensal fungi (mycobiota) component of the gut microbiota. Plays an essential role in antifungal immunity against dissemination of gut fungi: acts by promoting induction of antifungal IgG antibodies response in CX3CR1(+) macrophages to confer protection against disseminated C.albicans or C.auris infection. Also mediates immunity against other pathogens, such as certain bacteria, viruses and parasites; CARD9 signaling is however redundant with other innate immune responses. In response to L.monocytogenes infection, required for the production of inflammatory cytokines activated by intracellular peptidoglycan: acts by connecting NOD2 recognition of peptidoglycan to downstream activation of MAP kinases (MAPK) without activating NF-kappa-B. The polypeptide is Caspase recruitment domain-containing protein 9 (Rattus norvegicus (Rat)).